A 325-amino-acid chain; its full sequence is MIARIWSGESPLWRLLLPLSWLYGLVSGAIRLSYKLGFKRAWRAPVPVVVVGNLTAGGNGKTPVVIWLVEKLQQRGVRVGVVSRGYGGKAAAYPLLLTPETTTAEAGDEPVLIYQRTGAPVAVAPERAAAVKAILAAHNVQIIITDDGLQHYRLARDIEIVVIDGVRRFGNGWWLPAGPMRERASRLKTVDAAIVNGGVARAGEIPMQLAPGLAVNLRTGARCDVAQLSNIVAMAGIGHPPRFFATLEACGAHPQKCVPLADHQTLSPADVQALVGEGQTLVMTEKDAVKCRAFAEDNWWFLPVDARLSGEQPDKLLEHITSLVR.

55-62 (TAGGNGKT) contributes to the ATP binding site.

This sequence belongs to the LpxK family.

The enzyme catalyses a lipid A disaccharide + ATP = a lipid IVA + ADP + H(+). The protein operates within glycolipid biosynthesis; lipid IV(A) biosynthesis; lipid IV(A) from (3R)-3-hydroxytetradecanoyl-[acyl-carrier-protein] and UDP-N-acetyl-alpha-D-glucosamine: step 6/6. In terms of biological role, transfers the gamma-phosphate of ATP to the 4'-position of a tetraacyldisaccharide 1-phosphate intermediate (termed DS-1-P) to form tetraacyldisaccharide 1,4'-bis-phosphate (lipid IVA). This Salmonella heidelberg (strain SL476) protein is Tetraacyldisaccharide 4'-kinase.